The sequence spans 571 residues: Acetolactate synthase large subunit (571 aa).

Thiamine diphosphate is bound at residue Glu51. FAD contacts are provided by residues Arg153, 261–282 (HGTY…IGVR), and 304–323 (DIDP…IVGD). The tract at residues 394 to 474 (QHQMFTALYY…VLILNLNNSS (81 aa)) is thiamine pyrophosphate binding. Mg(2+)-binding residues include Asp445 and Asn472.

It belongs to the TPP enzyme family. Dimer of large and small chains. It depends on Mg(2+) as a cofactor. Requires thiamine diphosphate as cofactor.

The catalysed reaction is 2 pyruvate + H(+) = (2S)-2-acetolactate + CO2. It functions in the pathway amino-acid biosynthesis; L-isoleucine biosynthesis; L-isoleucine from 2-oxobutanoate: step 1/4. The protein operates within amino-acid biosynthesis; L-valine biosynthesis; L-valine from pyruvate: step 1/4. The chain is Acetolactate synthase large subunit (ilvI) from Buchnera aphidicola subsp. Acyrthosiphon pisum (strain APS) (Acyrthosiphon pisum symbiotic bacterium).